The following is a 360-amino-acid chain: Phospho-N-acetylmuramoyl-pentapeptide-transferase (360 aa).

Residues 1–25 (MLVWLAEHLVKYYSGFNVFSYLTFR) lie on the Periplasmic side of the membrane. Residues 26-46 (AIVSLLTALFISLWMGPRMIA) traverse the membrane as a helical segment. Residues 47-71 (HLQKLSFGQVVRNDGPESHFSKRGT) are Cytoplasmic-facing. The helical transmembrane segment at 72-92 (PTMGGIMILTAIVISVLLWAY) threads the bilayer. Proline 93 is a topological domain (periplasmic). Residues 94 to 114 (SNPYVWCVLVVLVGYGVIGFV) traverse the membrane as a helical segment. At 115-131 (DDYRKVVRKDTKGLIAR) the chain is on the cytoplasmic side. The helical transmembrane segment at 132–152 (WKYFWMSVIALGVAFALYLAG) threads the bilayer. At 153–167 (KDTPATQLVVPFFKD) the chain is on the periplasmic side. A helical transmembrane segment spans residues 168–188 (VMPQLGLFYILLAYFVIVGTG). Over 189-198 (NAVNLTDGLD) the chain is Cytoplasmic. The helical transmembrane segment at 199 to 219 (GLAIMPTVFVAGGFALVAWAT) threads the bilayer. At 220–235 (GNMNFASYLHIPYLRH) the chain is on the periplasmic side. A helical membrane pass occupies residues 236-256 (AGELVIVCTAIVGAGLGFLWF). Topologically, residues 257-262 (NTYPAQ) are cytoplasmic. The chain crosses the membrane as a helical span at residues 263-283 (VFMGDVGSLALGGALGIIAVL). At 284-287 (LRQE) the chain is on the periplasmic side. Residues 288-308 (FLLVIMGGVFVVETLSVILQV) traverse the membrane as a helical segment. Over 309 to 337 (GSFKLRGQRIFRMAPIHHHYELKGWPEPR) the chain is Cytoplasmic. The chain crosses the membrane as a helical span at residues 338–358 (VIVRFWIISLMLVLIGLATLK). Over 359 to 360 (VR) the chain is Periplasmic.

This sequence belongs to the glycosyltransferase 4 family. MraY subfamily. It depends on Mg(2+) as a cofactor.

The protein localises to the cell inner membrane. The catalysed reaction is UDP-N-acetyl-alpha-D-muramoyl-L-alanyl-gamma-D-glutamyl-meso-2,6-diaminopimeloyl-D-alanyl-D-alanine + di-trans,octa-cis-undecaprenyl phosphate = di-trans,octa-cis-undecaprenyl diphospho-N-acetyl-alpha-D-muramoyl-L-alanyl-D-glutamyl-meso-2,6-diaminopimeloyl-D-alanyl-D-alanine + UMP. It participates in cell wall biogenesis; peptidoglycan biosynthesis. In terms of biological role, catalyzes the initial step of the lipid cycle reactions in the biosynthesis of the cell wall peptidoglycan: transfers peptidoglycan precursor phospho-MurNAc-pentapeptide from UDP-MurNAc-pentapeptide onto the lipid carrier undecaprenyl phosphate, yielding undecaprenyl-pyrophosphoryl-MurNAc-pentapeptide, known as lipid I. The polypeptide is Phospho-N-acetylmuramoyl-pentapeptide-transferase (Shigella boydii serotype 18 (strain CDC 3083-94 / BS512)).